We begin with the raw amino-acid sequence, 316 residues long: Beta-ketoacyl-[acyl-carrier-protein] synthase III (316 aa).

Active-site residues include Cys112 and His243. Residues 244-248 form an ACP-binding region; the sequence is QANLR. Asn273 is an active-site residue.

This sequence belongs to the thiolase-like superfamily. FabH family. As to quaternary structure, homodimer.

Its subcellular location is the cytoplasm. It carries out the reaction malonyl-[ACP] + acetyl-CoA + H(+) = 3-oxobutanoyl-[ACP] + CO2 + CoA. It functions in the pathway lipid metabolism; fatty acid biosynthesis. Catalyzes the condensation reaction of fatty acid synthesis by the addition to an acyl acceptor of two carbons from malonyl-ACP. Catalyzes the first condensation reaction which initiates fatty acid synthesis and may therefore play a role in governing the total rate of fatty acid production. Possesses both acetoacetyl-ACP synthase and acetyl transacylase activities. Its substrate specificity determines the biosynthesis of branched-chain and/or straight-chain of fatty acids. This is Beta-ketoacyl-[acyl-carrier-protein] synthase III from Yersinia pseudotuberculosis serotype O:1b (strain IP 31758).